Reading from the N-terminus, the 512-residue chain is Mannose-1-phosphate guanylyltransferase (512 aa).

This sequence belongs to the mannose-6-phosphate isomerase type 2 family.

It carries out the reaction alpha-D-mannose 1-phosphate + GTP + H(+) = GDP-alpha-D-mannose + diphosphate. This chain is Mannose-1-phosphate guanylyltransferase (noeJ), found in Sinorhizobium fredii (strain NBRC 101917 / NGR234).